An 88-amino-acid chain; its full sequence is Translation initiation factor IF-1 2 (88 aa).

The S1-like domain maps to 1-72; that stretch reads MAKEELIELQ…TKGRINFRHK (72 aa).

Belongs to the IF-1 family. In terms of assembly, component of the 30S ribosomal translation pre-initiation complex which assembles on the 30S ribosome in the order IF-2 and IF-3, IF-1 and N-formylmethionyl-tRNA(fMet); mRNA recruitment can occur at any time during PIC assembly.

It localises to the cytoplasm. In terms of biological role, one of the essential components for the initiation of protein synthesis. Stabilizes the binding of IF-2 and IF-3 on the 30S subunit to which N-formylmethionyl-tRNA(fMet) subsequently binds. Helps modulate mRNA selection, yielding the 30S pre-initiation complex (PIC). Upon addition of the 50S ribosomal subunit IF-1, IF-2 and IF-3 are released leaving the mature 70S translation initiation complex. The protein is Translation initiation factor IF-1 2 of Bordetella avium (strain 197N).